Here is a 152-residue protein sequence, read N- to C-terminus: MFRGINAITIDTKGRLAIPTRYRSALGAEDKIPLVVTIDTEETCLLLYTAAQWQIIEDNLQKLPSFNAAARRIQRLLIGHATDVEVDANGRVLLPTVLRNYAKLEKDVVMIGQGNKFEVWNKELWESKREQWLAEEASMTDGLPEEMKTFSL.

SpoVT-AbrB domains lie at 5-52 (INAI…TAAQ) and 81-124 (ATDV…NKEL).

Belongs to the MraZ family. In terms of assembly, forms oligomers.

The protein resides in the cytoplasm. It is found in the nucleoid. The sequence is that of Transcriptional regulator MraZ from Legionella pneumophila (strain Paris).